Consider the following 838-residue polypeptide: Probable inorganic carbon transporter subunit DabA (838 aa).

Residues C353, D355, H537, and C552 each contribute to the Zn(2+) site.

The protein belongs to the inorganic carbon transporter (TC 9.A.2) DabA family. In terms of assembly, forms a complex with DabB. The cofactor is Zn(2+).

The protein localises to the cell membrane. Functionally, part of an energy-coupled inorganic carbon pump. The sequence is that of Probable inorganic carbon transporter subunit DabA from Chloroflexus aurantiacus (strain ATCC 29366 / DSM 635 / J-10-fl).